We begin with the raw amino-acid sequence, 305 residues long: Translation initiation factor eIF2B subunit alpha (305 aa).

At K35 the chain carries N6-acetyllysine.

It belongs to the eIF-2B alpha/beta/delta subunits family. Component of the translation initiation factor 2B (eIF2B) complex which is a heterodecamer of two sets of five different subunits: alpha, beta, gamma, delta and epsilon. Subunits alpha, beta and delta comprise a regulatory subcomplex and subunits epsilon and gamma comprise a catalytic subcomplex. Within the complex, the hexameric regulatory complex resides at the center, with the two heterodimeric catalytic subcomplexes bound on opposite sides.

It is found in the cytoplasm. The protein localises to the cytosol. Activated by the chemical integrated stress response (ISR) inhibitor ISRIB which stimulates guanine nucleotide exchange factor activity for both phosphorylated and unphosphorylated eIF2. Acts as a component of the translation initiation factor 2B (eIF2B) complex, which catalyzes the exchange of GDP for GTP on eukaryotic initiation factor 2 (eIF2) gamma subunit. Its guanine nucleotide exchange factor activity is repressed when bound to eIF2 complex phosphorylated on the alpha subunit, thereby limiting the amount of methionyl-initiator methionine tRNA available to the ribosome and consequently global translation is repressed. The protein is Translation initiation factor eIF2B subunit alpha (Eif2b1) of Rattus norvegicus (Rat).